Here is a 402-residue protein sequence, read N- to C-terminus: Zinc finger protein 587B (402 aa).

The region spanning 15 to 91 (VTFEDVAVKF…PVTGVSPKKA (77 aa)) is the KRAB domain. The C2H2-type 1 zinc-finger motif lies at 92–114 (HPCEMCGPILGDILHVADHQGTH). The C2H2-type 2; degenerate zinc finger occupies 120-142 (HRCEAWGNKLYDSGNFHQHQNEH). Glycyl lysine isopeptide (Lys-Gly) (interchain with G-Cter in SUMO2) cross-links involve residues Lys177, Lys200, and Lys253. C2H2-type zinc fingers lie at residues 242–264 (YVCC…QRVH), 270–292 (YECG…QQFH), 298–320 (YGCE…QKVH), 326–348 (YECG…QRIH), and 354–383 (YKCG…WVDH). Lys366 is covalently cross-linked (Glycyl lysine isopeptide (Lys-Gly) (interchain with G-Cter in SUMO2)).

This sequence belongs to the krueppel C2H2-type zinc-finger protein family.

Its subcellular location is the nucleus. May be involved in transcriptional regulation. The chain is Zinc finger protein 587B (ZNF587B) from Homo sapiens (Human).